Consider the following 138-residue polypeptide: Cysteine desulfuration protein SufE (138 aa).

Cysteine 51 functions as the Cysteine persulfide intermediate in the catalytic mechanism.

This sequence belongs to the SufE family. As to quaternary structure, homodimer. Interacts with SufS.

The protein localises to the cytoplasm. Its pathway is cofactor biosynthesis; iron-sulfur cluster biosynthesis. Functionally, participates in cysteine desulfuration mediated by SufS. Cysteine desulfuration mobilizes sulfur from L-cysteine to yield L-alanine and constitutes an essential step in sulfur metabolism for biosynthesis of a variety of sulfur-containing biomolecules. Functions as a sulfur acceptor for SufS, by mediating the direct transfer of the sulfur atom from the S-sulfanylcysteine of SufS, an intermediate product of cysteine desulfuration process. This chain is Cysteine desulfuration protein SufE, found in Escherichia coli O81 (strain ED1a).